The following is an 85-amino-acid chain: U4-theraphotoxin-Hhn1a (85 aa).

An N-terminal signal peptide occupies residues 1–22 (MKVTLIAILTCAAVLVLHTTAA). The propeptide occupies 23–48 (EELEAESQLMEVGMPDTELAAVDEER). Intrachain disulfides connect Cys52–Cys66, Cys56–Cys77, and Cys71–Cys82.

This sequence belongs to the neurotoxin 12 (Hwtx-2) family. 02 (Hwtx-2) subfamily. As to quaternary structure, monomer. As to expression, expressed by the venom gland.

It localises to the secreted. Its function is as follows. Neurotoxin active on both insects and mammals. The sequence is that of U4-theraphotoxin-Hhn1a from Cyriopagopus hainanus (Chinese bird spider).